The primary structure comprises 193 residues: Phosphoheptose isomerase (193 aa).

Residues 37–193 (LADSFKAGGK…QLIEKEMVKA (157 aa)) enclose the SIS domain. 52–54 (NGG) is a substrate binding site. Residues His61 and Glu65 each contribute to the Zn(2+) site. Substrate-binding positions include Glu65, 93–94 (ND), 119–121 (STS), Ser124, and Gln172. 2 residues coordinate Zn(2+): Gln172 and His180.

This sequence belongs to the SIS family. GmhA subfamily. In terms of assembly, homotetramer. Zn(2+) serves as cofactor.

It localises to the cytoplasm. The enzyme catalyses 2 D-sedoheptulose 7-phosphate = D-glycero-alpha-D-manno-heptose 7-phosphate + D-glycero-beta-D-manno-heptose 7-phosphate. It participates in carbohydrate biosynthesis; D-glycero-D-manno-heptose 7-phosphate biosynthesis; D-glycero-alpha-D-manno-heptose 7-phosphate and D-glycero-beta-D-manno-heptose 7-phosphate from sedoheptulose 7-phosphate: step 1/1. Functionally, catalyzes the isomerization of sedoheptulose 7-phosphate in D-glycero-D-manno-heptose 7-phosphate. The sequence is that of Phosphoheptose isomerase from Yersinia pseudotuberculosis serotype O:1b (strain IP 31758).